Here is a 417-residue protein sequence, read N- to C-terminus: Transcobalamin-1 (417 aa).

The N-terminal stretch at 1-25 (MRQSHQLPLVGLLLFSLIPSQLCQS) is a signal peptide. Positions 24–308 (QSCVVSEKDY…DVTKLLLVPK (285 aa)) are globular N-terminal alpha domain. An N-linked (GlcNAc...) asparagine glycan is attached at Asn-90. 143 to 147 (TNYYQ) is a binding site for cyanocob(III)alamin. A disulfide bridge links Cys-156 with Cys-198. N-linked (GlcNAc...) asparagine glycans are attached at residues Asn-161, Asn-166, and Asn-179. Cyanocob(III)alamin contacts are provided by Asp-187 and Gln-287. The segment at 309 to 327 (VQVNITDEPVPVVPTLSPE) is flexible linker. N-linked (GlcNAc...) asparagine glycans are attached at residues Asn-312, Asn-328, Asn-345, and Asn-360. The globular C-terminal beta domain stretch occupies residues 328-417 (NISVIYCVKI…GIMLSKMESI (90 aa)). Cyanocob(III)alamin is bound by residues 376 to 377 (YI) and 393 to 395 (WEH).

It belongs to the eukaryotic cobalamin transport proteins family. Post-translationally, contains about 30% carbohydrates. In terms of tissue distribution, haptocorrins are a family of cobalamin-binding glycoproteins found in blood, salivary and mucosal secretions.

It is found in the secreted. Functionally, binds vitamin B12 with femtomolar affinity and protects it from the acidic environment of the stomach. Binds to cobalamin and to cobalamin analogs such as cobinamide. The polypeptide is Transcobalamin-1 (TCN1) (Sus scrofa (Pig)).